The primary structure comprises 101 residues: Small ribosomal subunit protein uS14 (101 aa).

Positions 51–70 (LPRDSSPSRQRNRCSQTGRP) are disordered. The span at 52–68 (PRDSSPSRQRNRCSQTG) shows a compositional bias: polar residues.

Belongs to the universal ribosomal protein uS14 family. Part of the 30S ribosomal subunit. Contacts proteins S3 and S10.

In terms of biological role, binds 16S rRNA, required for the assembly of 30S particles and may also be responsible for determining the conformation of the 16S rRNA at the A site. The sequence is that of Small ribosomal subunit protein uS14 from Mannheimia succiniciproducens (strain KCTC 0769BP / MBEL55E).